A 467-amino-acid polypeptide reads, in one-letter code: Asparagine--tRNA ligase (467 aa).

Belongs to the class-II aminoacyl-tRNA synthetase family. As to quaternary structure, homodimer.

It localises to the cytoplasm. It catalyses the reaction tRNA(Asn) + L-asparagine + ATP = L-asparaginyl-tRNA(Asn) + AMP + diphosphate + H(+). The sequence is that of Asparagine--tRNA ligase from Legionella pneumophila (strain Lens).